Here is a 204-residue protein sequence, read N- to C-terminus: Sex-determining region Y protein (204 aa).

The segment at Arg-59–Lys-136 is sufficient for interaction with KPNB1. The HMG box DNA-binding region spans Val-60 to Lys-128. 2 required for nuclear localization regions span residues Lys-61–Lys-77 and Arg-130–Lys-136. The sufficient for interaction with EP300 stretch occupies residues Trp-107–Pro-139. Position 136 is an N6-acetyllysine (Lys-136). Residues Leu-138–Ser-155 are necessary for interaction with ZNF208 isoform KRAB-O. Residues Arg-175 to Leu-204 are disordered. Basic and acidic residues predominate over residues Gln-194 to Leu-204. The interval Tyr-198 to Leu-204 is necessary for interaction with SLC9A3R2.

The protein belongs to the SRY family. As to quaternary structure, interacts with CALM, EP300, HDAC3, KPNB1, ZNF208 isoform KRAB-O, PARP1, SLC9A3R2 and WT1. The interaction with EP300 modulates its DNA-binding activity. The interaction with KPNB1 is sensitive to dissociation by Ran in the GTP-bound form. Interaction with PARP1 impaired its DNA-binding activity. Phosphorylated on serine residues by PKA. Phosphorylation by PKA enhances its DNA-binding activity and stimulates transcription repression. Post-translationally, acetylation of Lys-136 contributes to its nuclear localization and enhances its interaction with KPNB1. Deacetylated by HDAC3. In terms of processing, poly-ADP-ribosylated by PARP1. ADP-ribosylation reduces its DNA-binding activity.

It is found in the nucleus speckle. Its subcellular location is the cytoplasm. It localises to the nucleus. In terms of biological role, transcriptional regulator that controls a genetic switch in male development. It is necessary and sufficient for initiating male sex determination by directing the development of supporting cell precursors (pre-Sertoli cells) as Sertoli rather than granulosa cells. Involved in different aspects of gene regulation including promoter activation or repression. Binds to the DNA consensus sequence 5'-[AT]AACAA[AT]-3'. SRY HMG box recognizes DNA by partial intercalation in the minor groove and promotes DNA bending. Also involved in pre-mRNA splicing. In male adult brain involved in the maintenance of motor functions of dopaminergic neurons. This Homo sapiens (Human) protein is Sex-determining region Y protein.